Reading from the N-terminus, the 174-residue chain is Shikimate kinase 2 (174 aa).

Gly12–Thr17 is a binding site for ATP. Mg(2+)-binding residues include Thr16 and Asp32. Substrate is bound by residues Asp34, Arg58, and Gly79. An LID domain region spans residues Glu112 to Lys126. Position 120 (Arg120) interacts with ATP. Arg139 serves as a coordination point for substrate. Gln155 contacts ATP.

It belongs to the shikimate kinase family. AroL subfamily. In terms of assembly, monomer. Mg(2+) serves as cofactor.

The protein localises to the cytoplasm. It catalyses the reaction shikimate + ATP = 3-phosphoshikimate + ADP + H(+). The protein operates within metabolic intermediate biosynthesis; chorismate biosynthesis; chorismate from D-erythrose 4-phosphate and phosphoenolpyruvate: step 5/7. Functionally, catalyzes the specific phosphorylation of the 3-hydroxyl group of shikimic acid using ATP as a cosubstrate. The chain is Shikimate kinase 2 from Enterobacter sp. (strain 638).